A 452-amino-acid polypeptide reads, in one-letter code: Low-affinity putrescine importer PlaP (452 aa).

The Cytoplasmic portion of the chain corresponds to 1-16; that stretch reads MSHNVTPNTSRVELRK. A helical transmembrane segment spans residues 17–37; the sequence is TLTLVPVVMMGLAYMQPMTLF. At 38–48 the chain is on the periplasmic side; it reads DTFGIVSGLTD. Residues 49 to 69 form a helical membrane-spanning segment; the sequence is GHVPTAYAFALIAILFTALSY. The Cytoplasmic segment spans residues 70–95; sequence GKLVRRYPSAGSAYTYAQKSISPTVG. The helical transmembrane segment at 96–116 threads the bilayer; sequence FMVGWSSLLDYLFAPMINILL. Residues 117–123 are Periplasmic-facing; the sequence is AKIYFEA. Residues 124 to 144 traverse the membrane as a helical segment; that stretch reads LVPSIPSWMFVVALVAFMTAF. At 145–158 the chain is on the cytoplasmic side; it reads NLRSLKSVANFNTV. The helical transmembrane segment at 159 to 179 threads the bilayer; the sequence is IVVLQVVLIAVILGMVVYGVF. Residues 180–199 lie on the Periplasmic side of the membrane; sequence EGEGAGTLASTRPFWSGDAH. The chain crosses the membrane as a helical span at residues 200 to 220; the sequence is VIPMITGATILCFSFTGFDGI. Topologically, residues 221 to 237 are cytoplasmic; sequence SNLSEETKDAERVIPRA. The helical transmembrane segment at 238–258 threads the bilayer; that stretch reads IFLTALIGGMIFIFATYFLQL. Over 259–283 the chain is Periplasmic; it reads YFPDISRFKDPDASQPEIMLYVAGK. The helical transmembrane segment at 284-304 threads the bilayer; sequence AFQVGALIFSTITVLASGMAA. Residues 305–339 are Cytoplasmic-facing; the sequence is HAGVARLMYVMGRDGVFPKSFFGYVHPKWRTPAMN. The next 2 helical transmembrane spans lie at 340–360 and 361–381; these read IILVGAIALLAINFDLVMATA and LINFGALVAFTFVNLSVISQF. Over 382-394 the chain is Cytoplasmic; sequence WIREKRNKTLKDH. A helical membrane pass occupies residues 395 to 415; that stretch reads FQYLFLPMCGALTVGALWVNL. The Periplasmic segment spans residues 416–417; the sequence is EE. A helical membrane pass occupies residues 418–438; sequence SSMVLGLIWAAIGLIYLACVT. At 439 to 452 the chain is on the cytoplasmic side; sequence KSFRNPVPQYEDVA.

Belongs to the amino acid-polyamine-organocation (APC) superfamily.

Its subcellular location is the cell inner membrane. It catalyses the reaction putrescine(in) + H(+)(in) = putrescine(out) + H(+)(out). In terms of biological role, putrescine importer. In Escherichia coli O157:H7, this protein is Low-affinity putrescine importer PlaP (plaP).